Here is a 250-residue protein sequence, read N- to C-terminus: Probable transcriptional regulatory protein tll0175 (250 aa).

The protein belongs to the TACO1 family.

The protein localises to the cytoplasm. The chain is Probable transcriptional regulatory protein tll0175 from Thermosynechococcus vestitus (strain NIES-2133 / IAM M-273 / BP-1).